The chain runs to 548 residues: Aromatic ammonia-lyase (548 aa).

The active-site Proton donor/acceptor is the Tyr55. Positions 144 to 146 (ASG) form a cross-link, 5-imidazolinone (Ala-Gly). Residue Ser145 is modified to 2,3-didehydroalanine (Ser). Residues Asn200, Gln288, Arg294, Asn324, Lys396, Glu425, and Asn428 each contribute to the (E)-cinnamate site.

The protein belongs to the PAL/histidase family. In terms of assembly, homotetramer. In terms of processing, contains an active site 4-methylidene-imidazol-5-one (MIO), which is formed autocatalytically by cyclization and dehydration of residues Ala-Ser-Gly.

The enzyme catalyses L-phenylalanine = (E)-cinnamate + NH4(+). It carries out the reaction L-tyrosine = (E)-4-coumarate + NH4(+). It catalyses the reaction 3,4-dimethoxy-L-phenylalanine = 3,4-dimethoxy-(E)-cinnamate + NH4(+). It participates in phenylpropanoid metabolism; trans-cinnamate biosynthesis; trans-cinnamate from L-phenylalanine: step 1/1. Aromatic ammonia-lyase (AAL) that shows reduced activity to catalyze the non-oxidative ammonia elimination from the canonical AAL substrates L-Phe and L-Tyr, contrasted by its pronounced efficiency towards substrates with electron-donor aromatic substituents such as 3,4-dimethoxy-L-phenylalanine. Is also able to catalyze the reverse reaction in vitro, i.e. the ammonia addition reaction to cinnamate derivatives, producing enantiopure phenylalanine derivatives. Shows no activity with L-His. In Loktanella atrilutea, this protein is Aromatic ammonia-lyase.